The following is a 253-amino-acid chain: Retinoic acid early-inducible protein 1-gamma (253 aa).

The N-terminal stretch at 1-28 (MAKAAVTKRHHFMIQKLLILLSYGYTNG) is a signal peptide. Residues cysteine 37 and cysteine 56 are joined by a disulfide bond. Residues asparagine 38, asparagine 70, asparagine 83, asparagine 143, and asparagine 156 are each glycosylated (N-linked (GlcNAc...) asparagine). An intrachain disulfide couples cysteine 90 to cysteine 190. Residues 198–230 (LKQSKEKPRSTSRSPSITQLTSTSPLPPPSHST) are disordered. Residues 211-221 (SPSITQLTSTS) show a composition bias toward low complexity. The GPI-anchor amidated serine moiety is linked to residue serine 227. The propeptide at 228–253 (HSTSKKGFISVGLIFISLLFAFAFAM) is removed in mature form.

The protein belongs to the NKG2D ligand family. Post-translationally, glycosylated. In terms of tissue distribution, expressed predominantly in embryonic brain.

Its subcellular location is the cell membrane. In terms of biological role, acts as a ligand for KLRK1. The polypeptide is Retinoic acid early-inducible protein 1-gamma (Raet1c) (Mus musculus (Mouse)).